A 106-amino-acid polypeptide reads, in one-letter code: uncharacterized protein (106 aa).

Positions 1-27 (MHHFVPSISLFMASVSFSVFFSHLATS) are cleaved as a signal peptide. The helical transmembrane segment at 42–62 (TLFSMVPLINSSFNLSVFLFF) threads the bilayer.

Its subcellular location is the membrane. This is an uncharacterized protein from Saccharomyces cerevisiae (strain ATCC 204508 / S288c) (Baker's yeast).